A 250-amino-acid chain; its full sequence is NADH-quinone oxidoreductase subunit C (250 aa).

Disordered stretches follow at residues 1 to 33 (MSDDSSDVKPGPKGPEQPAVEQSPENVPAPTGE) and 228 to 250 (LGGVPVEYKGGTVPPPDQRRSYN).

It belongs to the complex I 30 kDa subunit family. As to quaternary structure, NDH-1 is composed of 14 different subunits. Subunits NuoB, C, D, E, F, and G constitute the peripheral sector of the complex.

It localises to the cell membrane. The enzyme catalyses a quinone + NADH + 5 H(+)(in) = a quinol + NAD(+) + 4 H(+)(out). Its function is as follows. NDH-1 shuttles electrons from NADH, via FMN and iron-sulfur (Fe-S) centers, to quinones in the respiratory chain. The immediate electron acceptor for the enzyme in this species is believed to be a menaquinone. Couples the redox reaction to proton translocation (for every two electrons transferred, four hydrogen ions are translocated across the cytoplasmic membrane), and thus conserves the redox energy in a proton gradient. This chain is NADH-quinone oxidoreductase subunit C, found in Nocardioides sp. (strain ATCC BAA-499 / JS614).